Reading from the N-terminus, the 174-residue chain is Gamma-crystallin C (174 aa).

Beta/gamma crystallin 'Greek key' domains are found at residues 2–40 and 41–83; these read GKITFYEDRAFQGRSYETTTDCPNLQPYFSRCNSIRVES and GCWM…CLIP. The residue at position 23 (Cys-23) is an S-methylcysteine. The connecting peptide stretch occupies residues 84–87; the sequence is QTVS. Beta/gamma crystallin 'Greek key' domains lie at 88 to 128 and 129 to 171; these read HRLR…HVLE and GCWV…RRVV.

This sequence belongs to the beta/gamma-crystallin family. As to quaternary structure, monomer.

Its function is as follows. Crystallins are the dominant structural components of the vertebrate eye lens. The polypeptide is Gamma-crystallin C (CRYGC) (Homo sapiens (Human)).